A 702-amino-acid chain; its full sequence is Arginine decarboxylase 1 (702 aa).

At Lys151 the chain carries N6-(pyridoxal phosphate)lysine. Residue 336-346 (IDVGGGLGIDY) coordinates substrate. Residues 668-686 (ASGESSGMSSDSEGSAAGA) show a composition bias toward low complexity. Residues 668-702 (ASGESSGMSSDSEGSAAGAAEEDDDEWEFMRGLTV) form a disordered region.

This sequence belongs to the Orn/Lys/Arg decarboxylase class-II family. SpeA subfamily. Requires pyridoxal 5'-phosphate as cofactor. The cofactor is Mg(2+). As to expression, expressed in roots, leaves and stems (at protein level).

It catalyses the reaction L-arginine + H(+) = agmatine + CO2. It functions in the pathway amine and polyamine biosynthesis; agmatine biosynthesis; agmatine from L-arginine: step 1/1. The chain is Arginine decarboxylase 1 (ADC1) from Oryza sativa subsp. japonica (Rice).